A 560-amino-acid chain; its full sequence is MFS siderochrome iron transporter 1 (560 aa).

Asn-29 is a glycosylation site (N-linked (GlcNAc...) asparagine). The next 11 membrane-spanning stretches (helical) occupy residues 53-73 (LWLTFALLYLVAFVDMLLVSV), 90-110 (LLASVSIVATILSGCSTLTLA), 115-135 (VWGRIEGFLFMLLVVVVALIM), 146-166 (VAAHTLYWTGHIGMIYCVDVM), 177-194 (MIMFSINNTPTIASTFAG), 211-231 (FGAFAIMLVGVSLPVIVIMLF), 264-284 (VVGIVLITASFALILLPFSIV), 291-311 (WATGYIIAMEVVGVVCGAIFL), 331-351 (PTIIGSCLLYGVMFASALLTI), 354-374 (AGYVLNSFSLSSAILAPGIGL), and 379-399 (FKWAAYAGIPFMLLGTALLIP). The N-linked (GlcNAc...) asparagine glycan is linked to Asn-404. The next 3 helical transmembrane spans lie at 407–427 (IGAVTITQVLVGIGTSFFSVC), 441–461 (VAVVLAIWGMFGSIGASVGLA), and 522–542 (VIAGVCMMPLVMASIVIWRNV).

This sequence belongs to the major facilitator superfamily.

Its subcellular location is the membrane. Functionally, major facilitator transporter involved in siderophore transport. The polypeptide is MFS siderochrome iron transporter 1 (Ajellomyces capsulatus (Darling's disease fungus)).